Reading from the N-terminus, the 728-residue chain is Putative ankyrin repeat protein L271 (728 aa).

ANK repeat units follow at residues 142–171 (SDVN…NIKT) and 173–198 (IYSA…DIIL). Over residues 244–267 (STKSTKSSGSPKSIKPKKSNQNNN) the composition is skewed to low complexity. Positions 244 to 271 (STKSTKSSGSPKSIKPKKSNQNNNAKIN) are disordered. Positions 292-338 (TVDKMSSAKEQALNVYKEIENMENFILNKINITKKKALDKIKEIENI) form a coiled coil. 8 ANK repeats span residues 358 to 383 (TNTD…RQGY), 384 to 414 (DINK…NYEQ), 477 to 510 (DDLS…NINS), 514 to 543 (IGRS…DYSF), 547 to 576 (NGDT…DTKT), 594 to 626 (DIKT…NVSS), 630 to 659 (TKKT…NINS), and 663 to 696 (LGKT…KILI).

This chain is Putative ankyrin repeat protein L271, found in Acanthamoeba polyphaga (Amoeba).